Consider the following 946-residue polypeptide: Serine/arginine repetitive matrix protein 1 (946 aa).

N-acetylmethionine is present on M1. The necessary for DNA and RNA-binding stretch occupies residues 1 to 151 (MDAGFFRGTS…ASLKKQDEDK (151 aa)). The tract at residues 1–156 (MDAGFFRGTS…QDEDKDKRDK (156 aa)) is necessary for mRNA 3'-end cleavage and cytoplasmic accumulation. R7 is modified (citrulline). In terms of domain architecture, PWI spans 27–126 (QLKFAECLEK…AGIPSAFLEL (100 aa)). K127 participates in a covalent cross-link: Glycyl lysine isopeptide (Lys-Gly) (interchain with G-Cter in SUMO2). K140 carries the post-translational modification N6-acetyllysine. The segment covering 142 to 170 (ASLKKQDEDKDKRDKEEKESSREKRERSR) has biased composition (basic and acidic residues). Residues 142-946 (ASLKKQDEDK…MRKAQVSPQS (805 aa)) form a disordered region. The segment covering 171–207 (SPRRRKSRSPSPRRRSSPVRRERKRSHSRSPRHRTKS) has biased composition (basic residues). Positions 214 to 234 (PEKKEKSPELPEPSVRMKDSS) are enriched in basic and acidic residues. S220 and S227 each carry phosphoserine. A Glycyl lysine isopeptide (Lys-Gly) (interchain with G-Cter in SUMO1); alternate cross-link involves residue K231. Residue K231 forms a Glycyl lysine isopeptide (Lys-Gly) (interchain with G-Cter in SUMO2); alternate linkage. A phosphoserine mark is found at S234 and S240. T241 carries the phosphothreonine modification. Positions 246–273 (KAPKPEPVPEPKEPSPEKNSKKEKEKTR) are enriched in basic and acidic residues. K249 participates in a covalent cross-link: Glycyl lysine isopeptide (Lys-Gly) (interchain with G-Cter in SUMO2). S260 carries the phosphoserine modification. Basic residues-rich tracts occupy residues 274–327 (PRSR…RTPP) and 334–349 (PRHR…RRRS). The necessary for speckles and matrix localization stretch occupies residues 298-707 (RRHRSRSRSY…NKRHSPSPRP (410 aa)). Positions 350 to 366 (SASLSGSSSSSSSSRSR) are enriched in low complexity. Residues S387, S389, S391, and S400 each carry the phosphoserine modification. Position 404 is a phosphothreonine (T404). S412 carries the phosphoserine modification. T414 is modified (phosphothreonine). S418, S427, S429, and S434 each carry phosphoserine. Positions 426–436 (VSVSPGRTSGK) are enriched in polar residues. A Glycyl lysine isopeptide (Lys-Gly) (interchain with G-Cter in SUMO2) cross-link involves residue K445. Phosphoserine occurs at positions 448 and 450. K457 is covalently cross-linked (Glycyl lysine isopeptide (Lys-Gly) (interchain with G-Cter in SUMO2)). 2 positions are modified to phosphoserine: S461 and S463. A Glycyl lysine isopeptide (Lys-Gly) (interchain with G-Cter in SUMO2) cross-link involves residue K470. Phosphoserine is present on S476. A compositionally biased stretch (low complexity) spans 476-499 (SVQQRRQYRRQNQQSSSDSGSSST). The segment covering 501-516 (EDERPKRSHVKNGEVG) has biased composition (basic and acidic residues). Phosphoserine occurs at positions 522, 524, 526, 528, 530, 561, 563, 572, and 574. The span at 555–572 (SSRRRRSPSPPPARRRRS) shows a compositional bias: basic residues. Over residues 574-585 (SPAPPPPPPPPP) the composition is skewed to pro residues. The span at 586 to 611 (PRRRRSPTPPPRRRTPSPPPRRRSPS) shows a compositional bias: basic residues. A phosphothreonine mark is found at T593 and T600. S602 carries the phosphoserine modification. The span at 612 to 624 (PRRYSPPIQRRYS) shows a compositional bias: low complexity. Y615 bears the Phosphotyrosine mark. Residues S616, S624, and S626 each carry the phosphoserine modification. Position 633 is a phosphothreonine (T633). Residues S635, S645, S647, S655, and S657 each carry the phosphoserine modification. The span at 640-655 (PKRRASPSPPPKRRVS) shows a compositional bias: basic residues. Basic residues predominate over residues 668–682 (TKRRSPSLSSKHRKG). Pro residues predominate over residues 704–718 (SPRPRAPQTSSPPPV). A phosphoserine mark is found at S713, S714, S723, S725, S731, and S733. Residues 724–736 (ASPQGRQSPSPST) show a composition bias toward polar residues. At T736 the chain carries Phosphothreonine. A phosphoserine mark is found at S779, S781, S789, S793, S795, S797, S810, S814, S816, and S818. Residues 779–800 (SPSPQSVRRVSSSRSVSGSPEP) are compositionally biased toward low complexity. T819 bears the Phosphothreonine mark. S822 and S832 each carry phosphoserine. The segment covering 833–842 (PTPSLSPARN) has biased composition (polar residues). The residue at position 834 (T834) is a Phosphothreonine. Residues S836, S838, and S843 each carry the phosphoserine modification. Basic residues predominate over residues 850–875 (KKKKKKKDKKHKKDKKHKKHKKHKKE). A compositionally biased stretch (low complexity) spans 878 to 907 (VTIATPATAAPAAVSAATTTSAQEEPAAAP). T913 is modified (phosphothreonine). Phosphoserine is present on S915. The segment covering 924–934 (DLERHLREKAL) has biased composition (basic and acidic residues). S943 carries the phosphoserine modification.

Belongs to the splicing factor SR family. In terms of assembly, identified in the spliceosome C complex. Found in a pre-mRNA splicing complex with SFRS4, SFRS5, SNRP70, SNRPA1, SRRM1 and SRRM2. Component of the minor spliceosome, which splices U12-type introns. Found in a pre-mRNA exonic splicing enhancer (ESE) complex with SNRP70, SNRPA1, SRRM1 and TRA2B/SFRS10. Found in a mRNA splicing-dependent exon junction complex (EJC) with DEK, PRPF8, NCBP1, RBM8A, RNPS1, SRRM1 and ALYREF/THOC4. Interacts with DDX39B, CPSF1, RBM8A, RNPS1, and ALYREF/THOC4. Seems to be a compound of RNA export complexes that are released from speckles in a ATP-dependent manner. Post-translationally, citrullinated by PADI4. In terms of processing, phosphorylated on multiple serine and threonine residues by DYRK3 during the G2-to-M transition, after the nuclear-envelope breakdown. Phosphorylation by DYRK3 promotes disassembly of nuclear speckles.

The protein resides in the nucleus matrix. Its subcellular location is the nucleus speckle. Its function is as follows. Part of pre- and post-splicing multiprotein mRNP complexes. As a component of the minor spliceosome, involved in the splicing of U12-type introns in pre-mRNAs. Involved in numerous pre-mRNA processing events. Promotes constitutive and exonic splicing enhancer (ESE)-dependent splicing activation by bridging together sequence-specific (SR family proteins, SFRS4, SFRS5 and TRA2B/SFRS10) and basal snRNP (SNRP70 and SNRPA1) factors of the spliceosome. Stimulates mRNA 3'-end cleavage independently of the formation of an exon junction complex. Binds both pre-mRNA and spliced mRNA 20-25 nt upstream of exon-exon junctions. Binds RNA and DNA with low sequence specificity and has similar preference for either double- or single-stranded nucleic acid substrates. This is Serine/arginine repetitive matrix protein 1 (Srrm1) from Mus musculus (Mouse).